The primary structure comprises 62 residues: Cuticle protein 6.4 (62 aa).

Its function is as follows. Component of the cuticle of migratory locust which contains more than 100 different structural proteins. The sequence is that of Cuticle protein 6.4 from Locusta migratoria (Migratory locust).